A 110-amino-acid polypeptide reads, in one-letter code: MFEKTNRMNLLFDFYQELLTTKQKAYVSFYYLDDYSLGEIAEEFEVSRQAIYDNIKRTEESLEKYEEKLGMLKKYQQREKLFSQLEAQLTKKNFLDEQVKDTLEQLKNID.

The protein belongs to the UPF0122 family.

Might take part in the signal recognition particle (SRP) pathway. This is inferred from the conservation of its genetic proximity to ftsY/ffh. May be a regulatory protein. In Listeria monocytogenes serotype 4b (strain F2365), this protein is UPF0122 protein LMOf2365_1829.